Here is a 337-residue protein sequence, read N- to C-terminus: DNA-directed RNA polymerase subunit alpha (337 aa).

The interval 1–233 is alpha N-terminal domain (alpha-NTD); the sequence is MIQKNWQELI…DQLSIFVNFE (233 aa). An alpha C-terminal domain (alpha-CTD) region spans residues 249–337; sequence FNPALLKKVD…DLAKRYEDQY (89 aa).

This sequence belongs to the RNA polymerase alpha chain family. In terms of assembly, homodimer. The RNAP catalytic core consists of 2 alpha, 1 beta, 1 beta' and 1 omega subunit. When a sigma factor is associated with the core the holoenzyme is formed, which can initiate transcription.

The enzyme catalyses RNA(n) + a ribonucleoside 5'-triphosphate = RNA(n+1) + diphosphate. Functionally, DNA-dependent RNA polymerase catalyzes the transcription of DNA into RNA using the four ribonucleoside triphosphates as substrates. The protein is DNA-directed RNA polymerase subunit alpha of Brucella suis (strain ATCC 23445 / NCTC 10510).